The sequence spans 144 residues: MKIKIINRSHHPLPTYATSASAGMDLRASIEEPITLLPLERRLIPTGLFIELPVGYEAQIRPRSGLALRHGITLVNSPGTIDADYRGEIGIIMINLSNTPFTIADGERICQLVIARHEQAEWVLTDELADTERGAGGFGHTGKE.

Residues 63–65 (RSG), Asn-76, and 80–82 (TID) each bind substrate.

The protein belongs to the dUTPase family. Mg(2+) is required as a cofactor.

It carries out the reaction dUTP + H2O = dUMP + diphosphate + H(+). It participates in pyrimidine metabolism; dUMP biosynthesis; dUMP from dCTP (dUTP route): step 2/2. Its function is as follows. This enzyme is involved in nucleotide metabolism: it produces dUMP, the immediate precursor of thymidine nucleotides and it decreases the intracellular concentration of dUTP so that uracil cannot be incorporated into DNA. The polypeptide is Deoxyuridine 5'-triphosphate nucleotidohydrolase (Porphyromonas gingivalis (strain ATCC BAA-308 / W83)).